The primary structure comprises 413 residues: Phosphatidylcholine:ceramide cholinephosphotransferase 1 (413 aa).

Positions 7-70 (WSPKKVADWL…LDMIETLKME (64 aa)) constitute an SAM domain. A Phosphoserine modification is found at Ser8. The next 5 helical transmembrane spans lie at 136–156 (FLAF…ISVV), 184–204 (FSIC…QWLL), 215–235 (FFCI…VTTL), 276–296 (MCGD…YLFI), and 304–324 (LWWY…CILL). The active site involves His285. Topologically, residues 325-413 (AHDHYTVDVV…VKYSRLVNDT (89 aa)) are cytoplasmic. Residues His328 and Asp332 contribute to the active site.

The protein belongs to the sphingomyelin synthase family. Brain, heart, kidney, liver, muscle and stomach.

Its subcellular location is the golgi apparatus membrane. It carries out the reaction an N-acylsphing-4-enine + a 1,2-diacyl-sn-glycero-3-phosphocholine = a sphingomyelin + a 1,2-diacyl-sn-glycerol. The enzyme catalyses an N-acylsphinganine + a 1,2-diacyl-sn-glycero-3-phosphocholine = an N-acylsphinganine-1-phosphocholine + a 1,2-diacyl-sn-glycerol. The catalysed reaction is an N-acyl-(4R)-4-hydroxysphinganine + a 1,2-diacyl-sn-glycero-3-phosphocholine = an N-acyl-(4R)-4-hydroxysphinganine-phosphocholine + a 1,2-diacyl-sn-glycerol. It catalyses the reaction 1-(9Z-octadecenoyl)-2-acyl-sn-3-glycerol + a sphingomyelin = a 1-(9Z-octadecenoyl)-2-acyl-sn-glycero-3-phosphocholine + an N-acylsphing-4-enine. It carries out the reaction N-hexadecanoylsphinganine + a 1,2-diacyl-sn-glycero-3-phosphocholine = N-hexadecanoyl-sphinganine-1-phosphocholine + a 1,2-diacyl-sn-glycerol. The enzyme catalyses N-hexadecanoyl-(4R)-hydroxysphinganine + a 1,2-diacyl-sn-glycero-3-phosphocholine = N-hexadecanoyl-(4R)-hydroxysphinganine-phosphocholine + a 1,2-diacyl-sn-glycerol. The catalysed reaction is an N-acylsphing-4-enine + a 1,2-diacyl-sn-glycero-3-phosphoethanolamine = an N-acylsphing-4-enine 1-phosphoethanolamine + a 1,2-diacyl-sn-glycerol. It participates in sphingolipid metabolism. With respect to regulation, inhibited by bacterial PC-phospholipase C inhibitor D609. Major sphingomyelin synthase at the Golgi apparatus. Catalyzes the reversible transfer of phosphocholine moiety in sphingomyelin biosynthesis: in the forward reaction transfers phosphocholine head group of phosphatidylcholine (PC) on to ceramide (CER) to form ceramide phosphocholine (sphingomyelin, SM) and diacylglycerol (DAG) as by-product, and in the reverse reaction transfers phosphocholine from SM to DAG to form PC and CER. The direction of the reaction depends on the levels of CER and DAG in Golgi membranes. Converts the newly synthesized CER, that is transported from the endoplasmic reticulum to the trans-Golgi by the Cer transport protein (CERT), to SM. Can form a heteromeric complex with glucosylceramide synthase (GCS) increasing SMS activity and reducing glucosylceramide synthesis, a critical mechanism that controls the metabolic fate of CER in the Golgi. Does not use free phosphorylcholine or CDP-choline as donor. Can also transfer phosphoethanolamine head group of phosphatidylethanolamine (PE) on to CER to form ceramide phosphoethanolamine (CPE). Regulates receptor-mediated signal transduction via mitogenic DAG and proapoptotic CER, as well as via SM, a structural component of membrane rafts that serve as platforms for signal transduction and protein sorting. Plays a role in secretory transport via regulation of DAG pool at the Golgi apparatus and its downstream effects on PRKD1. This Homo sapiens (Human) protein is Phosphatidylcholine:ceramide cholinephosphotransferase 1 (SGMS1).